The sequence spans 174 residues: 16S rRNA aminocarboxypropyltransferase (174 aa).

S-adenosyl-L-methionine-binding residues include T26, L73, L97, and S116.

It belongs to the TDD superfamily. TSR3 family.

The protein resides in the cytoplasm. The enzyme catalyses an N(1)-methylpseudouridine in rRNA + S-adenosyl-L-methionine = N(1)-methyl-N(3)-[(3S)-3-amino-3-carboxypropyl]pseudouridine in rRNA + S-methyl-5'-thioadenosine + H(+). Its function is as follows. Aminocarboxypropyltransferase that catalyzes the aminocarboxypropyl transfer on pseudouridine corresponding to position 914 in M.jannaschii 16S rRNA. It constitutes the last step in biosynthesis of the hypermodified N1-methyl-N3-(3-amino-3-carboxypropyl) pseudouridine (m1acp3-Psi). This chain is 16S rRNA aminocarboxypropyltransferase, found in Methanosarcina acetivorans (strain ATCC 35395 / DSM 2834 / JCM 12185 / C2A).